The following is a 367-amino-acid chain: Leucine dehydrogenase (367 aa).

The active site involves Lys80. Residue 180–186 (GVGNVAY) participates in NAD(+) binding.

It belongs to the Glu/Leu/Phe/Val dehydrogenases family. As to quaternary structure, homohexamer.

The enzyme catalyses L-leucine + NAD(+) + H2O = 4-methyl-2-oxopentanoate + NH4(+) + NADH + H(+). It participates in amino-acid degradation; L-leucine degradation; 4-methyl-2-oxopentanoate from L-leucine (dehydrogenase route): step 1/1. Its function is as follows. Catalyzes the reversible deamination of L-leucine to 4-methyl-2-oxopentanoate. The chain is Leucine dehydrogenase (ldh) from Geobacillus stearothermophilus (Bacillus stearothermophilus).